The chain runs to 253 residues: Tryptophan synthase alpha chain (253 aa).

Catalysis depends on proton acceptor residues Glu45 and Asp56.

It belongs to the TrpA family. In terms of assembly, tetramer of two alpha and two beta chains.

It catalyses the reaction (1S,2R)-1-C-(indol-3-yl)glycerol 3-phosphate + L-serine = D-glyceraldehyde 3-phosphate + L-tryptophan + H2O. Its pathway is amino-acid biosynthesis; L-tryptophan biosynthesis; L-tryptophan from chorismate: step 5/5. The alpha subunit is responsible for the aldol cleavage of indoleglycerol phosphate to indole and glyceraldehyde 3-phosphate. In Flavobacterium psychrophilum (strain ATCC 49511 / DSM 21280 / CIP 103535 / JIP02/86), this protein is Tryptophan synthase alpha chain.